A 294-amino-acid chain; its full sequence is Probable 2-(5''-triphosphoribosyl)-3'-dephosphocoenzyme-A synthase (294 aa).

Belongs to the CitG/MdcB family.

The enzyme catalyses 3'-dephospho-CoA + ATP = 2'-(5''-triphospho-alpha-D-ribosyl)-3'-dephospho-CoA + adenine. The chain is Probable 2-(5''-triphosphoribosyl)-3'-dephosphocoenzyme-A synthase from Streptococcus pyogenes serotype M28 (strain MGAS6180).